Reading from the N-terminus, the 324-residue chain is AT-hook motif nuclear-localized protein 24 (324 aa).

Polar residues predominate over residues 1-12 (MDPVQSHGSQSS). 2 disordered regions span residues 1 to 122 (MDPV…KPPI) and 262 to 324 (MQTP…RPPY). Low complexity predominate over residues 24-33 (LHLQQQQQEF). The segment covering 69–79 (NIDNIANNSGS) has biased composition (polar residues). The span at 88–99 (GGSGEGGGGSGG) shows a compositional bias: gly residues. Residues 105–117 (RRPRGRPAGSKNK) constitute a DNA-binding region (a.T hook). Residues 129–268 (ANALRTHVME…EDEMQTPVHG (140 aa)) enclose the PPC domain. Residues 280–297 (MMGQQLQHQQQAMSGHQG) are compositionally biased toward low complexity. Over residues 304–318 (GSVQLQQQHDQSYWS) the composition is skewed to polar residues.

The protein resides in the nucleus. Functionally, transcription factor that specifically binds AT-rich DNA sequences related to the nuclear matrix attachment regions (MARs). This chain is AT-hook motif nuclear-localized protein 24, found in Arabidopsis thaliana (Mouse-ear cress).